The sequence spans 360 residues: Ribosomal RNA large subunit methyltransferase M (360 aa).

Residues Ser-187, 220–223, Asp-239, Asp-259, and Asp-276 each bind S-adenosyl-L-methionine; that span reads CPGG. The active-site Proton acceptor is Lys-305.

Belongs to the class I-like SAM-binding methyltransferase superfamily. RNA methyltransferase RlmE family. RlmM subfamily. In terms of assembly, monomer.

The protein resides in the cytoplasm. It catalyses the reaction cytidine(2498) in 23S rRNA + S-adenosyl-L-methionine = 2'-O-methylcytidine(2498) in 23S rRNA + S-adenosyl-L-homocysteine + H(+). In terms of biological role, catalyzes the 2'-O-methylation at nucleotide C2498 in 23S rRNA. The chain is Ribosomal RNA large subunit methyltransferase M from Shewanella sediminis (strain HAW-EB3).